The sequence spans 407 residues: MSAVPLKNDGAAHAGVRTISVLGATGSIGDSTMDLLRAAPEKYRVESLTGNANVAGLAKLAKEFSAKFVAVADPARLGELRAALADTEIACGAGESAVIEAASRPADWVMAAISGAAGLKPALAAVDRGATVALANKECLVCAGDFFMSRAVAAGARILPADSEHNALFQALASGNRHELTRVIITASGGPFRTWAAADIEQATLAQALKHPNWSMGQKITIDSASMMNKGLEVIEASYLFALSPDEIDVLVHPQSIVHGLVEFADHSVVAQLGAPDMRIPIAHCLGWPDRIAGRAARLDLAKIGQLTFEAPDFVRFPGLRLAYDALRTGNGATTVYNAANEIAVAAFIAQKIRFGAIARLVEDTLNGWVRAGNLAPLSSADDAIAVDHNARKMAATLLPQIAAKAS.

NADPH contacts are provided by threonine 25, glycine 26, serine 27, isoleucine 28, asparagine 53, and asparagine 136. Lysine 137 is a 1-deoxy-D-xylulose 5-phosphate binding site. Residue glutamate 138 coordinates NADPH. Residue aspartate 162 participates in Mn(2+) binding. 1-deoxy-D-xylulose 5-phosphate is bound by residues serine 163, glutamate 164, serine 188, and histidine 211. Glutamate 164 is a binding site for Mn(2+). Glycine 217 is a binding site for NADPH. 1-deoxy-D-xylulose 5-phosphate is bound by residues serine 224, asparagine 229, lysine 230, and glutamate 233. Position 233 (glutamate 233) interacts with Mn(2+).

Belongs to the DXR family. Mg(2+) serves as cofactor. Requires Mn(2+) as cofactor.

The enzyme catalyses 2-C-methyl-D-erythritol 4-phosphate + NADP(+) = 1-deoxy-D-xylulose 5-phosphate + NADPH + H(+). It functions in the pathway isoprenoid biosynthesis; isopentenyl diphosphate biosynthesis via DXP pathway; isopentenyl diphosphate from 1-deoxy-D-xylulose 5-phosphate: step 1/6. Functionally, catalyzes the NADPH-dependent rearrangement and reduction of 1-deoxy-D-xylulose-5-phosphate (DXP) to 2-C-methyl-D-erythritol 4-phosphate (MEP). The polypeptide is 1-deoxy-D-xylulose 5-phosphate reductoisomerase (Rhodopseudomonas palustris (strain BisB5)).